A 541-amino-acid chain; its full sequence is Ankyrin repeat domain-containing protein 13C (541 aa).

Over residues 1–20 (MTGEKIRSLRRDHKPSKEDG) the composition is skewed to basic and acidic residues. The tract at residues 1–53 (MTGEKIRSLRRDHKPSKEDGDVLEPCEEEATAALGGAFTGGRSGPGGSGKGGK) is disordered. Over residues 21-30 (DVLEPCEEEA) the composition is skewed to acidic residues. Positions 37–52 (AFTGGRSGPGGSGKGG) are enriched in gly residues. ANK repeat units follow at residues 111–142 (PSLY…QKDN), 143–172 (HGNT…PVKV), and 176–205 (QGWS…QQSR). Ser411 bears the Phosphoserine mark.

Its subcellular location is the endoplasmic reticulum membrane. Its function is as follows. Acts as a molecular chaperone for G protein-coupled receptors, regulating their biogenesis and exit from the ER. The protein is Ankyrin repeat domain-containing protein 13C (Ankrd13c) of Mus musculus (Mouse).